A 199-amino-acid chain; its full sequence is Copper transport protein CTR4 (199 aa).

2 consecutive transmembrane segments (helical) span residues 62–82 and 152–172; these read KGMF…IELI and AFFV…FIFL.

The protein belongs to the copper transporter (Ctr) (TC 1.A.56) family. SLC31A subfamily.

It is found in the membrane. Required for high affinity copper (probably reduced Cu I) transport into the cell. Plays a role in fungal pathogenesis during host infection. This chain is Copper transport protein CTR4, found in Cryptococcus neoformans var. grubii serotype A (strain H99 / ATCC 208821 / CBS 10515 / FGSC 9487) (Filobasidiella neoformans var. grubii).